We begin with the raw amino-acid sequence, 357 residues long: Homoserine kinase (357 aa).

Lysine 133 is covalently cross-linked (Glycyl lysine isopeptide (Lys-Gly) (interchain with G-Cter in ubiquitin)).

Belongs to the GHMP kinase family. Homoserine kinase subfamily. As to quaternary structure, homodimer.

The enzyme catalyses L-homoserine + ATP = O-phospho-L-homoserine + ADP + H(+). It participates in amino-acid biosynthesis; L-threonine biosynthesis; L-threonine from L-aspartate: step 4/5. In terms of biological role, commits homoserine to the threonine biosynthesis pathway by catalyzing its O-phosphorylation. The chain is Homoserine kinase (THR1) from Saccharomyces cerevisiae (strain ATCC 204508 / S288c) (Baker's yeast).